The primary structure comprises 321 residues: 4-dihydromethyl-trisporate dehydrogenase (321 aa).

The active-site Proton donor is tyrosine 51. Position 113 (histidine 113) interacts with substrate.

This sequence belongs to the aldo/keto reductase family.

It participates in pheromone biosynthesis; trisporate biosynthesis. In terms of biological role, catalyzes the NADP-dependent oxidation of (+) mating-type specific precursor 4-dihydromethyl-trisporate to methyl-trisporate. The chain is 4-dihydromethyl-trisporate dehydrogenase (tdh) from Mucor mucedo (Common pinmould).